The sequence spans 394 residues: Arogenate dehydratase 2 (394 aa).

Residues 1 to 24 are disordered; the sequence is MAATTTLRSPKIPHPPPESTPSNL. A chloroplast-targeting transit peptide spans 1–47; sequence MAATTTLRSPKIPHPPPESTPSNLSYLSQISLTPVPKRRRFISIYAC. Residues 108-283 enclose the Prephenate dehydratase domain; that stretch reads RVAYQGVRGA…NVTRFLMLAR (176 aa). The ACT domain occupies 297–388; the sequence is SVVFSLDEGP…TFLRVLGSYP (92 aa).

In terms of tissue distribution, expressed at low levels in petals (corollas and tubes), stems, leaves, pistils, stamens, ovaries and sepals.

Its subcellular location is the plastid. It localises to the chloroplast stroma. It catalyses the reaction prephenate + H(+) = 3-phenylpyruvate + CO2 + H2O. It carries out the reaction L-arogenate + H(+) = L-phenylalanine + CO2 + H2O. The protein operates within amino-acid biosynthesis; L-phenylalanine biosynthesis; L-phenylalanine from L-arogenate: step 1/1. In terms of biological role, converts the prephenate and L-arogenate produced from the shikimate-chorismate pathway into 3-phenylpyruvate and phenylalanine (Phe), respectively. Involved in floral volatile benzenoids and phenylpropanoids (FVBP) production. This is Arogenate dehydratase 2 from Petunia hybrida (Petunia).